The primary structure comprises 236 residues: Class B acid phosphatase (236 aa).

A signal peptide spans methionine 1–alanine 22. Aspartate 70 serves as the catalytic Nucleophile. The Mg(2+) site is built by aspartate 70 and aspartate 72. The Proton donor role is filled by aspartate 72. Substrate is bound by residues threonine 138–glycine 139 and lysine 176. Aspartate 191 contacts Mg(2+).

It belongs to the class B bacterial acid phosphatase family. As to quaternary structure, homotetramer. Mg(2+) is required as a cofactor.

Its subcellular location is the periplasm. The catalysed reaction is a phosphate monoester + H2O = an alcohol + phosphate. Functionally, dephosphorylates several organic phosphate monoesters. Also has a phosphotransferase activity catalyzing the transfer of low-energy phosphate groups from organic phosphate monoesters to free hydroxyl groups of various organic compounds. In Marinomonas sp. (strain MWYL1), this protein is Class B acid phosphatase.